A 402-amino-acid chain; its full sequence is UPF0261 protein BPP1817 (402 aa).

The protein belongs to the UPF0261 family.

The protein is UPF0261 protein BPP1817 of Bordetella parapertussis (strain 12822 / ATCC BAA-587 / NCTC 13253).